A 632-amino-acid chain; its full sequence is Golgin subfamily A member 8J (632 aa).

Positions 1–76 (MAEETQHNKL…TSSATLKDLE (76 aa)) are disordered. Coiled coils occupy residues 86-154 (LDSR…HMKR) and 220-421 (LKVQ…SLMA). Composition is skewed to basic and acidic residues over residues 352–362 (KQEERIQEQHK) and 427–440 (HGGE…EEAP). 3 disordered regions span residues 352 to 377 (KQEE…FKEP), 423 to 452 (PGEG…DPES), and 496 to 524 (LSEP…DEGE). Over residues 508–520 (LGGGHHQAGAQGG) the composition is skewed to gly residues.

It belongs to the GOLGA8 family.

In Homo sapiens (Human), this protein is Golgin subfamily A member 8J (GOLGA8J).